We begin with the raw amino-acid sequence, 330 residues long: Phosphate acyltransferase (330 aa).

It belongs to the PlsX family. As to quaternary structure, homodimer. Probably interacts with PlsY.

The protein resides in the cytoplasm. It catalyses the reaction a fatty acyl-[ACP] + phosphate = an acyl phosphate + holo-[ACP]. It functions in the pathway lipid metabolism; phospholipid metabolism. Its function is as follows. Catalyzes the reversible formation of acyl-phosphate (acyl-PO(4)) from acyl-[acyl-carrier-protein] (acyl-ACP). This enzyme utilizes acyl-ACP as fatty acyl donor, but not acyl-CoA. The sequence is that of Phosphate acyltransferase from Streptococcus agalactiae serotype III (strain NEM316).